Reading from the N-terminus, the 572-residue chain is Cleavage stimulation factor subunit 2 (572 aa).

Residue S14 is modified to Phosphoserine. Residues 16 to 94 form the RRM domain; that stretch reads RSVFVGNIPY…RALRVDNAAS (79 aa). Residues 108 to 248 form an interactions with CSTF3 and SYMPK region; it reads APVIESPYGE…VNGAPPLMQA (141 aa). A Glycyl lysine isopeptide (Lys-Gly) (interchain with G-Cter in SUMO2) cross-link involves residue K189. The disordered stretch occupies residues 208 to 230; it reads VHSAGPGSGSSVSMNQQNPQTPQ. Position 308 is an omega-N-methylarginine (R308). The interval 322-382 is disordered; sequence LGDAPNDPRG…RGGPLTEPRP (61 aa). Residues 360 to 373 are compositionally biased toward basic and acidic residues; sequence PGHDSRGPPPHEMR. One copy of the 1; approximate repeat lies at 410-414; the sequence is IDARA. The 11 X 5 AA tandem repeats of M-E-A-R-[AG] stretch occupies residues 410-464; the sequence is IDARAMEARGLDARGLEARAMEARAMEARAMEARAMEARAMEVRGMEARSMDTRG. Residues 415 to 419 form repeat 2; that stretch reads MEARG. The 3; approximate repeat unit spans residues 420–424; that stretch reads LDARG. Residues 425–429 form a 4; approximate repeat; that stretch reads LEARA. A run of 4 repeats spans residues 430-434, 435-439, 440-444, and 445-449. One copy of the 9; approximate repeat lies at 450–454; sequence MEVRG. The stretch at 455–459 is repeat 10; the sequence is MEARS. The stretch at 460-464 is one 11; approximate repeat; it reads MDTRG. R463 and R470 each carry omega-N-methylarginine. The interaction with RPO2TC1 stretch occupies residues 509–572; it reads IQGGGQPGGF…EQIQKSTGAP (64 aa). S519 bears the Phosphoserine mark.

In terms of assembly, the CSTF complex is composed of CSTF1 (50 kDa subunit), CSTF2 (64 kDa subunit) and CSTF3 (77 kDa subunit). CSTF2 directly interacts with CSTF3, SYMPK and RPO2TC1. Interacts with HSF1 in heat-stressed cells. Interacts with CPSF2, CPSF3 and FIP1L1. Interacts with DDX1.

It is found in the nucleus. In terms of biological role, one of the multiple factors required for polyadenylation and 3'-end cleavage of mammalian pre-mRNAs. This subunit is directly involved in the binding to pre-mRNAs. This chain is Cleavage stimulation factor subunit 2 (CSTF2), found in Bos taurus (Bovine).